Here is a 273-residue protein sequence, read N- to C-terminus: Phosphatidylglycerol--prolipoprotein diacylglyceryl transferase (273 aa).

Transmembrane regions (helical) follow at residues Leu20–Ala40, Phe59–Tyr79, and Gly97–Trp117. An a 1,2-diacyl-sn-glycero-3-phospho-(1'-sn-glycerol)-binding site is contributed by Arg142. Transmembrane regions (helical) follow at residues Phe206–Phe226 and Met243–Met263.

Belongs to the Lgt family.

The protein localises to the cell inner membrane. The catalysed reaction is L-cysteinyl-[prolipoprotein] + a 1,2-diacyl-sn-glycero-3-phospho-(1'-sn-glycerol) = an S-1,2-diacyl-sn-glyceryl-L-cysteinyl-[prolipoprotein] + sn-glycerol 1-phosphate + H(+). Its pathway is protein modification; lipoprotein biosynthesis (diacylglyceryl transfer). Its function is as follows. Catalyzes the transfer of the diacylglyceryl group from phosphatidylglycerol to the sulfhydryl group of the N-terminal cysteine of a prolipoprotein, the first step in the formation of mature lipoproteins. In Gluconobacter oxydans (strain 621H) (Gluconobacter suboxydans), this protein is Phosphatidylglycerol--prolipoprotein diacylglyceryl transferase.